The sequence spans 561 residues: Type 2 DNA topoisomerase 6 subunit B (561 aa).

ATP is bound by residues Asn-46, Asp-78, 99 to 100 (TK), 109 to 116 (GQQGIGIS), and Lys-471.

The protein belongs to the TOP6B family. Homodimer. Heterotetramer of two Top6A and two Top6B chains.

It carries out the reaction ATP-dependent breakage, passage and rejoining of double-stranded DNA.. Relaxes both positive and negative superturns and exhibits a strong decatenase activity. This is Type 2 DNA topoisomerase 6 subunit B from Thermococcus gammatolerans (strain DSM 15229 / JCM 11827 / EJ3).